The primary structure comprises 177 residues: Gamma-crystallin M1-2 (177 aa).

Beta/gamma crystallin 'Greek key' domains lie at 2–40 and 41–83; these read GKIIFYEDRNFQGRSYECSNDNPDLQPNFNACNSVRVEN and GCWM…RLLS. Residues 84–90 are connecting peptide; it reads QNLGIGT. Beta/gamma crystallin 'Greek key' domains lie at 91-131 and 132-174; these read NKLR…NVLD and GYWI…RRVI.

The protein belongs to the beta/gamma-crystallin family. Monomer.

Its function is as follows. Crystallins are the dominant structural components of the vertebrate eye lens. The polypeptide is Gamma-crystallin M1-2 (Aquarana catesbeiana (American bullfrog)).